We begin with the raw amino-acid sequence, 615 residues long: 1-deoxy-D-xylulose-5-phosphate synthase (615 aa).

Thiamine diphosphate contacts are provided by residues His76 and 117–119; that span reads GHS. Asp148 lines the Mg(2+) pocket. Residues 149 to 150, Asn177, Tyr284, and Glu365 each bind thiamine diphosphate; that span reads GA. Asn177 contacts Mg(2+).

It belongs to the transketolase family. DXPS subfamily. Homodimer. The cofactor is Mg(2+). Requires thiamine diphosphate as cofactor.

It catalyses the reaction D-glyceraldehyde 3-phosphate + pyruvate + H(+) = 1-deoxy-D-xylulose 5-phosphate + CO2. Its pathway is metabolic intermediate biosynthesis; 1-deoxy-D-xylulose 5-phosphate biosynthesis; 1-deoxy-D-xylulose 5-phosphate from D-glyceraldehyde 3-phosphate and pyruvate: step 1/1. Its function is as follows. Catalyzes the acyloin condensation reaction between C atoms 2 and 3 of pyruvate and glyceraldehyde 3-phosphate to yield 1-deoxy-D-xylulose-5-phosphate (DXP). In Francisella tularensis subsp. holarctica (strain FTNF002-00 / FTA), this protein is 1-deoxy-D-xylulose-5-phosphate synthase.